A 302-amino-acid chain; its full sequence is Glutamyl-Q tRNA(Asp) synthetase (302 aa).

Residues 13 to 17 (RFAPS) and aspartate 49 contribute to the L-glutamate site. Residues 16–26 (PSPTGPLHLGS) carry the 'HIGH' region motif. 4 residues coordinate Zn(2+): cysteine 105, cysteine 107, tyrosine 119, and cysteine 123. The L-glutamate site is built by tyrosine 178 and arginine 196. The 'KMSKS' region motif lies at 234-238 (KLSKQ). Lysine 237 contacts ATP.

This sequence belongs to the class-I aminoacyl-tRNA synthetase family. GluQ subfamily. The cofactor is Zn(2+).

Catalyzes the tRNA-independent activation of glutamate in presence of ATP and the subsequent transfer of glutamate onto a tRNA(Asp). Glutamate is transferred on the 2-amino-5-(4,5-dihydroxy-2-cyclopenten-1-yl) moiety of the queuosine in the wobble position of the QUC anticodon. The sequence is that of Glutamyl-Q tRNA(Asp) synthetase from Methylococcus capsulatus (strain ATCC 33009 / NCIMB 11132 / Bath).